Reading from the N-terminus, the 168-residue chain is MAAESLPFSFGALSSWELEAWYEDLQEVLSSDENRGTCVSPPGNKEEESKSFTTLDPASLAWLTEEPGPPEVTHTSQSPCSPESSQSSLAQEEEEEDQGRTRKRKQSGQSPARAGKQRMKEKEQENERKVAQLAEENERLKQEIERLTREVEATRRALIDRMVNLHQA.

Positions 10–18 (FGALSSWEL) are interaction with TRIB3. The N-terminal stretch occupies residues 10 to 26 (FGALSSWELEAWYEDLQ). A phosphoserine; by CK2 mark is found at serine 14, serine 15, serine 30, and serine 31. Residues 31–141 (SDENRGTCVS…QLAEENERLK (111 aa)) form a disordered region. Positions 76–90 (SQSPCSPESSQSSLA) are enriched in low complexity. A phosphoserine; by MAPK14 mark is found at serine 78 and serine 81. Positions 98–161 (QGRTRKRKQS…EATRRALIDR (64 aa)) constitute a bZIP domain. Residues 100-129 (RTRKRKQSGQSPARAGKQRMKEKEQENERK) are basic motif. Over residues 118–141 (RMKEKEQENERKVAQLAEENERLK) the composition is skewed to basic and acidic residues. The interval 133–147 (LAEENERLKQEIERL) is leucine-zipper.

It belongs to the bZIP family. In terms of assembly, heterodimer. Interacts with TCF7L2/TCF4, EP300/P300, HDAC1, HDAC5 and HDAC6. Interacts with TRIB3 which blocks its association with EP300/P300. Interacts with FOXO3, CEBPB and ATF4. Post-translationally, ubiquitinated, leading to its degradation by the proteasome. Phosphorylation at serine residues by MAPK14 enhances its transcriptional activation activity while phosphorylation at serine residues by CK2 inhibits its transcriptional activation activity.

It is found in the cytoplasm. The protein localises to the nucleus. In terms of biological role, multifunctional transcription factor in ER stress response. Plays an essential role in the response to a wide variety of cell stresses and induces cell cycle arrest and apoptosis in response to ER stress. Plays a dual role both as an inhibitor of CCAAT/enhancer-binding protein (C/EBP) function and as an activator of other genes. Acts as a dominant-negative regulator of C/EBP-induced transcription: dimerizes with members of the C/EBP family, impairs their association with C/EBP binding sites in the promoter regions, and inhibits the expression of C/EBP regulated genes. Positively regulates the transcription of TRIB3, IL6, IL8, IL23, TNFRSF10B/DR5, PPP1R15A/GADD34, BBC3/PUMA, BCL2L11/BIM and ERO1L. Negatively regulates; expression of BCL2 and MYOD1, ATF4-dependent transcriptional activation of asparagine synthetase (ASNS), CEBPA-dependent transcriptional activation of hepcidin (HAMP) and CEBPB-mediated expression of peroxisome proliferator-activated receptor gamma (PPARG). Inhibits the canonical Wnt signaling pathway by binding to TCF7L2/TCF4, impairing its DNA-binding properties and repressing its transcriptional activity. Plays a regulatory role in the inflammatory response through the induction of caspase-11 (CASP4/CASP11) which induces the activation of caspase-1 (CASP1) and both these caspases increase the activation of pro-IL1B to mature IL1B which is involved in the inflammatory response. The polypeptide is DNA damage-inducible transcript 3 protein (DDIT3) (Bos taurus (Bovine)).